The primary structure comprises 781 residues: Probable aminopeptidase 2 (781 aa).

Substrate-binding positions include Glu-105 and 237-241 (GAMEN). His-272 provides a ligand contact to Zn(2+). Glu-273 functions as the Proton acceptor in the catalytic mechanism. 2 residues coordinate Zn(2+): His-276 and Glu-295.

The protein belongs to the peptidase M1 family. The cofactor is Zn(2+).

The protein resides in the cytoplasm. The polypeptide is Probable aminopeptidase 2 (ape2) (Sulfurisphaera tokodaii (strain DSM 16993 / JCM 10545 / NBRC 100140 / 7) (Sulfolobus tokodaii)).